The following is a 391-amino-acid chain: 4-coumarate--CoA ligase (391 aa).

The protein belongs to the ATP-dependent AMP-binding enzyme family.

It catalyses the reaction (E)-4-coumarate + ATP + CoA = (E)-4-coumaroyl-CoA + AMP + diphosphate. Functionally, converts p-coumaric acid into p-coumaryl CoA. This is necessary for the activation of the photoactive yellow protein (PYP) chromophore. This is 4-coumarate--CoA ligase (pcl) from Halorhodospira halophila (Ectothiorhodospira halophila).